Consider the following 269-residue polypeptide: MTDPVTLPDLLAMKRRGEKIACLTAYDASSAALQDEAGIEVILVGDSLGNVIQGQPTTLSVTLDHMVYHTACVQRAARRALVLADLPFLSYCTPEQAVRSAARLIRDGGAQVVKLEGGRERLDVVRFLTEQNVPVCGHLGLQPQAIHRLGRYALQGRDAESACRMVEDARQLAEAGAMLLVLECIPWELAQEITAAVDIPTIGIGAGRHCDGQVLVWQDMLGMSARLPRFCKDFLAGNAGVREAVSAYVREVKAGIFPGDRHSFGRDGP.

Mg(2+) is bound by residues aspartate 46 and aspartate 85. Residues 46-47 (DS), aspartate 85, and lysine 114 contribute to the 3-methyl-2-oxobutanoate site. Glutamate 116 contacts Mg(2+). The active-site Proton acceptor is glutamate 183.

It belongs to the PanB family. Homodecamer; pentamer of dimers. It depends on Mg(2+) as a cofactor.

The protein localises to the cytoplasm. It carries out the reaction 3-methyl-2-oxobutanoate + (6R)-5,10-methylene-5,6,7,8-tetrahydrofolate + H2O = 2-dehydropantoate + (6S)-5,6,7,8-tetrahydrofolate. Its pathway is cofactor biosynthesis; (R)-pantothenate biosynthesis; (R)-pantoate from 3-methyl-2-oxobutanoate: step 1/2. Functionally, catalyzes the reversible reaction in which hydroxymethyl group from 5,10-methylenetetrahydrofolate is transferred onto alpha-ketoisovalerate to form ketopantoate. This Methylococcus capsulatus (strain ATCC 33009 / NCIMB 11132 / Bath) protein is 3-methyl-2-oxobutanoate hydroxymethyltransferase.